A 184-amino-acid chain; its full sequence is UPF0301 protein Rsph17029_2659 (184 aa).

It belongs to the UPF0301 (AlgH) family.

The sequence is that of UPF0301 protein Rsph17029_2659 from Cereibacter sphaeroides (strain ATCC 17029 / ATH 2.4.9) (Rhodobacter sphaeroides).